The following is a 235-amino-acid chain: Hydroxyacylglutathione hydrolase (235 aa).

The Zn(2+) site is built by H53, H55, D57, H58, H109, D127, and H165.

The protein belongs to the metallo-beta-lactamase superfamily. Glyoxalase II family. Monomer. Requires Zn(2+) as cofactor.

The enzyme catalyses an S-(2-hydroxyacyl)glutathione + H2O = a 2-hydroxy carboxylate + glutathione + H(+). It participates in secondary metabolite metabolism; methylglyoxal degradation; (R)-lactate from methylglyoxal: step 2/2. In terms of biological role, thiolesterase that catalyzes the hydrolysis of S-D-lactoyl-glutathione to form glutathione and D-lactic acid. This is Hydroxyacylglutathione hydrolase from Actinobacillus pleuropneumoniae serotype 7 (strain AP76).